Reading from the N-terminus, the 211-residue chain is FMN-dependent NADH:quinone oxidoreductase (211 aa).

Residues Ser-10, 16–18, and 138–141 contribute to the FMN site; these read STS and TQGG.

The protein belongs to the azoreductase type 1 family. In terms of assembly, homodimer. FMN serves as cofactor.

It carries out the reaction 2 a quinone + NADH + H(+) = 2 a 1,4-benzosemiquinone + NAD(+). It catalyses the reaction N,N-dimethyl-1,4-phenylenediamine + anthranilate + 2 NAD(+) = 2-(4-dimethylaminophenyl)diazenylbenzoate + 2 NADH + 2 H(+). In terms of biological role, quinone reductase that provides resistance to thiol-specific stress caused by electrophilic quinones. Its function is as follows. Also exhibits azoreductase activity. Catalyzes the reductive cleavage of the azo bond in aromatic azo compounds to the corresponding amines. The protein is FMN-dependent NADH:quinone oxidoreductase of Frankia alni (strain DSM 45986 / CECT 9034 / ACN14a).